Consider the following 441-residue polypeptide: MKVTFSLMQKASKQIDKFALYVPKSGVFPKGFKVATQATGVKKNGNLDLGIIRNVNTSRPSSAAAVFTTNKFKAAPVLVSKEVLEVTGGENVDAIVVNSGCANAVTGEVGLKDAREIAGVANQNLGKQNATLVMSTGVIGQRLSMDKIVPALSQQFETNAFKDDFESWLNLARAISTTDTFPKLISSNFKLANGTEYTLTGIAKGAGMICPNMATLLGFIVTDLPITPSALQKMLRSATDRSFNCISVDGDMSTNDTISMLANGAVDTAVIDENSQDFVQVQTQVTEFAQRLAQLVVRDGEGSTKFVTVNVKNALNFKDAKIIAESISNSMLVKTALYGQDANWGRILCAIGYAKLDNLQSLDDKKINVSFVATDNSEPKELKLIVDGVPQLDIDEARASELLAQQDLEVLVDLGTGSEECQFWTCDLTHEYVTINGDYRS.

The substrate site is built by T177, K204, T215, E301, N436, and S441. T215 functions as the Nucleophile in the catalytic mechanism.

Belongs to the ArgJ family. As to quaternary structure, heterodimer of an alpha and a beta chain. Post-translationally, the alpha and beta chains are autoproteolytically processed from a single precursor protein within the mitochondrion.

It is found in the mitochondrion matrix. The catalysed reaction is N(2)-acetyl-L-ornithine + L-glutamate = N-acetyl-L-glutamate + L-ornithine. The enzyme catalyses L-glutamate + acetyl-CoA = N-acetyl-L-glutamate + CoA + H(+). It participates in amino-acid biosynthesis; L-arginine biosynthesis; L-ornithine and N-acetyl-L-glutamate from L-glutamate and N(2)-acetyl-L-ornithine (cyclic): step 1/1. It functions in the pathway amino-acid biosynthesis; L-arginine biosynthesis; N(2)-acetyl-L-ornithine from L-glutamate: step 1/4. Catalyzes two activities which are involved in the cyclic version of arginine biosynthesis: the synthesis of acetylglutamate from glutamate and acetyl-CoA, and of ornithine by transacetylation between acetylornithine and glutamate. The sequence is that of Arginine biosynthesis bifunctional protein ArgJ, mitochondrial from Kluyveromyces lactis (strain ATCC 8585 / CBS 2359 / DSM 70799 / NBRC 1267 / NRRL Y-1140 / WM37) (Yeast).